The chain runs to 173 residues: MVQGVFVTGPPGVGKTTLIVKVTSRLKERGIRIVGFYTVEEREGGVRVGFRLVNVSNGEWRWLAHVNKVQGPMVGKYHVDVNSIEWGLTLLNQEGDLYVIDEVGPMEMKHPSFLRRVEDVVNSRRFLITIHVKMSNWVNSHLNLGSLIRLSYVNRDAAVDEVLNYLRTILNMA.

ATP is bound by residues 9-16 (GPPGVGKT) and 97-104 (LYVIDEVG).

Belongs to the THEP1 NTPase family.

It carries out the reaction a ribonucleoside 5'-triphosphate + H2O = a ribonucleoside 5'-diphosphate + phosphate + H(+). Its function is as follows. Has nucleotide phosphatase activity towards ATP, GTP, CTP, TTP and UTP. May hydrolyze nucleoside diphosphates with lower efficiency. This is Nucleoside-triphosphatase THEP1 from Caldivirga maquilingensis (strain ATCC 700844 / DSM 13496 / JCM 10307 / IC-167).